Consider the following 530-residue polypeptide: MNNARPIRRALISVSDKTGIVEFAQALAERGVDILSTGGTARLLAEKGISVTEVSDYTGFPEMMDGRVKTLHPKVHGGVLGRRGQDDGIMEQHGINPIDMVVVNLYPFAETVAKEGCTLADAVENIDIGGPTMVRSAAKNHKDVTIVVNAHDYDRVITEMDANEKSLTLETRFDLAIAAFEHTASYDGMIANYFGTMVPSYGENKEGDEESKFPRTFNQQFEKKQDMRYGENSHQAAAFYVEANPEEASVSTARQIQGKALSYNNIADTDAALECVKEFDEPACVIVKHANPCGVALGKNILEAYDRAFKTDPTSAFGGIIAFNRELDAATATAITERQFVEVIIAPSVSAEAVEIVAAKKNLRLLECGEWTTKTTGFDVKRVNGGLLVQDRDQGMVSEDDLQVVSKRQPTAEELKDALFCWKVAKYVKSNAIVYSKGDMTIGVGAGQMSRVYSAKIAGIKAADEGLQVEGCVMASDAFFPFRDGIDAAAEAGIKCVIQPGGSMRDNEVIEAADEHGMAMIFTGMRHFRH.

The MGS-like domain maps to 1-148 (MNNARPIRRA…KNHKDVTIVV (148 aa)).

The protein belongs to the PurH family.

The catalysed reaction is (6R)-10-formyltetrahydrofolate + 5-amino-1-(5-phospho-beta-D-ribosyl)imidazole-4-carboxamide = 5-formamido-1-(5-phospho-D-ribosyl)imidazole-4-carboxamide + (6S)-5,6,7,8-tetrahydrofolate. The enzyme catalyses IMP + H2O = 5-formamido-1-(5-phospho-D-ribosyl)imidazole-4-carboxamide. Its pathway is purine metabolism; IMP biosynthesis via de novo pathway; 5-formamido-1-(5-phospho-D-ribosyl)imidazole-4-carboxamide from 5-amino-1-(5-phospho-D-ribosyl)imidazole-4-carboxamide (10-formyl THF route): step 1/1. It functions in the pathway purine metabolism; IMP biosynthesis via de novo pathway; IMP from 5-formamido-1-(5-phospho-D-ribosyl)imidazole-4-carboxamide: step 1/1. The protein is Bifunctional purine biosynthesis protein PurH of Aliivibrio fischeri (strain MJ11) (Vibrio fischeri).